The sequence spans 180 residues: UPF0227 protein YcfP (180 aa).

The protein belongs to the UPF0227 family.

The chain is UPF0227 protein YcfP from Salmonella choleraesuis (strain SC-B67).